A 373-amino-acid polypeptide reads, in one-letter code: NADPH-dependent 3-keto-steroid reductase Hsd3b5 (373 aa).

Residues 10 to 15, tyrosine 155, and lysine 159 contribute to the NADP(+) site; that span reads GAGGFL. Residue lysine 159 is the Proton donor of the active site. The chain crosses the membrane as a helical span at residues 288–308; the sequence is LPLLYWLAFLLETVSFLLRPF. Position 350 is an N6-acetyllysine (lysine 350).

The protein belongs to the 3-beta-HSD family. Expressed predominantly in male liver.

It localises to the endoplasmic reticulum membrane. The protein resides in the mitochondrion membrane. The enzyme catalyses a 3beta-hydroxysteroid + NADP(+) = a 3-oxosteroid + NADPH + H(+). It catalyses the reaction 5alpha-androstane-3beta,17beta-diol + NADP(+) = 17beta-hydroxy-5alpha-androstan-3-one + NADPH + H(+). It carries out the reaction 3beta-hydroxy-5alpha-androstan-17-one + NADP(+) = 5alpha-androstan-3,17-dione + NADPH + H(+). It participates in steroid metabolism. Responsible for the reduction of the oxo group on the C-3 of 5alpha-androstane steroids. Catalyzes the conversion of dihydrotestosterone to its inactive form 5alpha-androstanediol, that does not bind androgen receptor/AR. Also converts androstanedione, a precursor of testosterone and estrone, to epiandrosterone. Does not function as an isomerase. The polypeptide is NADPH-dependent 3-keto-steroid reductase Hsd3b5 (Rattus norvegicus (Rat)).